A 292-amino-acid chain; its full sequence is AT-hook motif nuclear-localized protein 23 (292 aa).

The segment at 23-100 (HLHHNSSSDD…SKNKPKPPVI (78 aa)) is disordered. A compositionally biased stretch (gly residues) spans 60-79 (SGGGSGSSGGGGGHGGGGDV). A DNA-binding region (a.T hook) is located at residues 82–94 (RRPRGRPPGSKNK). In terms of domain architecture, PPC spans 106–242 (ANTLRAHILE…EDEQQQQLGG (137 aa)).

It is found in the nucleus. In terms of biological role, transcription factor that specifically binds AT-rich DNA sequences related to the nuclear matrix attachment regions (MARs). This chain is AT-hook motif nuclear-localized protein 23, found in Arabidopsis thaliana (Mouse-ear cress).